Reading from the N-terminus, the 56-residue chain is Protein hunchback (56 aa).

3 C2H2-type zinc fingers span residues 1-5 (HLRNH), 11-33 (FRCDKCDYQCVNKSMLNSHLKSH), and 39-56 (YRCADCTYATKYCHSLKL).

This sequence belongs to the hunchback C2H2-type zinc-finger protein family.

The protein resides in the nucleus. In terms of biological role, gap class segmentation protein that controls development of head structures. The protein is Protein hunchback (hb) of Locusta migratoria (Migratory locust).